We begin with the raw amino-acid sequence, 207 residues long: Fibroblast growth factor 18 (207 aa).

An N-terminal signal peptide occupies residues 1-27; sequence MYSAPSTCTCLCLHFLLLCFQVQVLAA. N-linked (GlcNAc...) asparagine glycosylation occurs at Asn-39. The cysteines at positions 109 and 127 are disulfide-linked. Asn-137 is a glycosylation site (N-linked (GlcNAc...) asparagine).

Belongs to the heparin-binding growth factors family. In terms of assembly, interacts with FGFR3 and FGFR4.

The protein localises to the secreted. Plays an important role in the regulation of cell proliferation, cell differentiation and cell migration. Required for normal ossification and bone development. Stimulates hepatic and intestinal proliferation. The sequence is that of Fibroblast growth factor 18 (FGF18) from Bos taurus (Bovine).